The following is a 141-amino-acid chain: Protein C19orf12 homolog (141 aa).

The chain crosses the membrane as a helical span at residues 37–57 (GLAFAGGLIGGPLGIAVGGAV).

The protein belongs to the C19orf12 family.

The protein resides in the mitochondrion. The protein localises to the mitochondrion membrane. It localises to the endoplasmic reticulum. Its subcellular location is the cytoplasm. It is found in the cytosol. In Danio rerio (Zebrafish), this protein is Protein C19orf12 homolog.